The chain runs to 308 residues: MSDTLLTLRDVHINFPARKNWLGKTTEHVHAINGIDLQIRRGETLGIVGESGCGKSTLAQLLMGMLQPSHGQYIRSGSQRIMQMVFQDPLSSLNPRLPVWRIITEPLWIAKRSSEQQRRALAEELAVQVGIRPEYLDRLPHAFSGGQRQRIAIARALSSQPDVIVLDEPTSALDISVQAQILNLLVTLQENHGLTYVLISHNVSVIRHMSDRVAVMYLGQIVELGDAQQVLTAPAHPYTRLLLDSLPAIDKPLEEEWALRKTDLPGNRTLPQGCFFYERCPLATHGCEVRQSLAIREDGRELRCWRAL.

Residues 8-243 enclose the ABC transporter domain; the sequence is LRDVHINFPA…PAHPYTRLLL (236 aa). 49–56 is a binding site for ATP; sequence GESGCGKS.

It belongs to the ABC transporter superfamily. As to quaternary structure, the complex is composed of two ATP-binding proteins (DdpD and DdpF), two transmembrane proteins (DdpB and DdpC) and a solute-binding protein (DdpA).

It is found in the cell inner membrane. In terms of biological role, part of the ABC transporter complex DdpABCDF, which is probably involved in D,D-dipeptide transport. Probably responsible for energy coupling to the transport system. The polypeptide is Probable D,D-dipeptide transport ATP-binding protein DdpF (Escherichia coli (strain K12)).